The sequence spans 102 residues: 10 kDa heat shock protein, mitochondrial (102 aa).

Ala2 is modified (N-acetylalanine). An N6-acetyllysine modification is found at Lys8. At Lys28 the chain carries N6-succinyllysine. Lys40 carries the post-translational modification N6-acetyllysine; alternate. N6-malonyllysine; alternate occurs at positions 40, 54, and 56. 3 positions are modified to N6-succinyllysine; alternate: Lys40, Lys54, and Lys56. Lys56 bears the N6-acetyllysine; alternate mark. The residue at position 57 (Ser57) is a Phosphoserine. N6-acetyllysine; alternate is present on residues Lys66 and Lys70. An N6-succinyllysine; alternate mark is found at Lys66 and Lys70. A Phosphothreonine modification is found at Thr79. 2 positions are modified to N6-acetyllysine; alternate: Lys80 and Lys86. N6-succinyllysine; alternate occurs at positions 80 and 86. Position 99 is an N6-acetyllysine (Lys99).

It belongs to the GroES chaperonin family. As to quaternary structure, homoheptamer arranged in a ring structure. 2 heptameric Hsp10 rings interact with a Hsp60 tetradecamer in the structure of a back-to-back double heptameric ring to form the symmetrical football complex.

It is found in the mitochondrion matrix. Co-chaperonin implicated in mitochondrial protein import and macromolecular assembly. Together with Hsp60, facilitates the correct folding of imported proteins. May also prevent misfolding and promote the refolding and proper assembly of unfolded polypeptides generated under stress conditions in the mitochondrial matrix. The functional units of these chaperonins consist of heptameric rings of the large subunit Hsp60, which function as a back-to-back double ring. In a cyclic reaction, Hsp60 ring complexes bind one unfolded substrate protein per ring, followed by the binding of ATP and association with 2 heptameric rings of the co-chaperonin Hsp10. This leads to sequestration of the substrate protein in the inner cavity of Hsp60 where, for a certain period of time, it can fold undisturbed by other cell components. Synchronous hydrolysis of ATP in all Hsp60 subunits results in the dissociation of the chaperonin rings and the release of ADP and the folded substrate protein. The polypeptide is 10 kDa heat shock protein, mitochondrial (Hspe1) (Mus musculus (Mouse)).